The primary structure comprises 515 residues: Ecdysteroid UDP-glucosyltransferase (515 aa).

The signal sequence occupies residues Met1–Ser31.

Belongs to the UDP-glycosyltransferase family.

Catalyzes the transfer of glucose from UDP-glucose to ecdysteroids which are insect molting hormones. Expression of egt interferes with normal insect development and block molting. The polypeptide is Ecdysteroid UDP-glucosyltransferase (EGT) (Spodoptera littoralis nuclear polyhedrosis virus (SlNPV)).